The following is a 127-amino-acid chain: MFSTLLAVFIGGGVGSVARWQLGVKFNSLYPTLPLGTLLANLIGAFVIGGALAFFLRHPHLDQDWKILITTGLCGGLTTFSTFSAEVVMFLQSGQLAAAGLHVLLNLAGSLLMTALAFALVTWVTTH.

The next 4 membrane-spanning stretches (helical) occupy residues 4–24 (TLLAVFIGGGVGSVARWQLGV), 35–55 (LGTLLANLIGAFVIGGALAFF), 71–91 (TGLCGGLTTFSTFSAEVVMFL), and 103–123 (VLLNLAGSLLMTALAFALVTW). Na(+) contacts are provided by glycine 75 and threonine 78.

This sequence belongs to the fluoride channel Fluc/FEX (TC 1.A.43) family.

It localises to the cell inner membrane. It catalyses the reaction fluoride(in) = fluoride(out). With respect to regulation, na(+) is not transported, but it plays an essential structural role and its presence is essential for fluoride channel function. Functionally, fluoride-specific ion channel. Important for reducing fluoride concentration in the cell, thus reducing its toxicity. This Pectobacterium atrosepticum (strain SCRI 1043 / ATCC BAA-672) (Erwinia carotovora subsp. atroseptica) protein is Fluoride-specific ion channel FluC.